Reading from the N-terminus, the 540-residue chain is O-phosphoserine--tRNA(Cys) ligase (540 aa).

Substrate-binding positions include 188 to 190, 233 to 235, 275 to 276, and Asn-319; these read HMT, SAS, and YY.

Belongs to the class-II aminoacyl-tRNA synthetase family. O-phosphoseryl-tRNA(Cys) synthetase subfamily. In terms of assembly, homotetramer. Interacts with SepCysS.

It carries out the reaction tRNA(Cys) + O-phospho-L-serine + ATP = O-phospho-L-seryl-tRNA(Cys) + AMP + diphosphate. In terms of biological role, catalyzes the attachment of O-phosphoserine (Sep) to tRNA(Cys). In Methanococcus aeolicus (strain ATCC BAA-1280 / DSM 17508 / OCM 812 / Nankai-3), this protein is O-phosphoserine--tRNA(Cys) ligase.